The primary structure comprises 347 residues: Subtilase cytotoxin subunit A (347 aa).

The first 21 residues, 1 to 21 (MLKILWTYILFLLFISASARA), serve as a signal peptide directing secretion. The Peptidase S8 domain maps to 24-327 (PWYFDAIGLT…GRVLNAEKAI (304 aa)). Residues D52, H89, and S272 each act as charge relay system in the active site. C288 and C331 are disulfide-bonded. Residues 322-347 (NAEKAISMFCKKNYIPVRQGRMSEEL) are A2 domain. A Prevents secretion from ER motif is present at residues 344-347 (SEEL).

The protein belongs to the peptidase S8 family. In terms of assembly, forms a complex with SubB with the stoichiometry SubA1:SubB5 (called SubAB5).

The protein localises to the secreted. It is found in the host cytoplasm. The protein resides in the host cytosol. Its subcellular location is the host endoplasmic reticulum lumen. Functionally, protease subunit of subtilase cytotoxin SubAB5. An endoprotease specific for host endoplasmic reticulum (ER) chaperone BiP/HSPA5, has no activity on human HSP70 or HSPA8. Cleaves between 'Leu-416' and 'Leu-417' of BiP/HSPA5 in the hinge between BiP's ATPase and protein-binding domains. This induces host ER stress response and eventual cell death. Culture supernatant of E.coli expressing both subA and subB are toxic for Vero cells (African green monkey kidney cell line), Chinese hamster ovary cells and Hct-8 cells (human colonic epithelial cell line); the subunits are not toxic individually. Purified SubAB5 is highly toxic, &lt;0.1 pg is able to kill at least 50% of 30'000 Vero cells in a microtiter plate assay after 3 days; no cytotoxicity is seen at 24 hours. Preabsorption with cells expressing a ganglioside GM2 mimic reduced cytotoxicity of SubAB5 by 93% in the Vero cytotoxicity assay. Intraperitoneal injection of 200 ng of purified SubAB5 kills mice; the higher the dose the faster the mice die. Animals injected intraperitoneally with purified SubAB5 have microvascular thrombi in the brain and other organs, including the renal tubules and glomeruli. Injection induces an unfolded response in mice. Mice fed E.coli cells expressing cloned SubAB5 experience drastic weight loss and appear ill and lethargic. Protein synthesis in Vero cells is transiently inhibited by SubAB5; both subunits are required for this effect. Inhibition of protein synthesis is prevented by brefeldin A; cells are arrested in the G1 phase. SubAB5 at 100 ng/ml induced caspase-dependent apoptosis in Vero cells through mitochondrial membrane damage. This chain is Subtilase cytotoxin subunit A, found in Escherichia coli.